We begin with the raw amino-acid sequence, 460 residues long: tRNA modification GTPase MnmE (460 aa).

The (6S)-5-formyl-5,6,7,8-tetrahydrofolate site is built by Arg24, Glu81, and Lys121. Positions 218–384 (GLVVAIAGPP…MVEALAGFAA (167 aa)) constitute a TrmE-type G domain. GTP-binding positions include 228-233 (NVGKST), 247-253 (SPHAGTT), and 272-275 (DTAG). Mg(2+)-binding residues include Ser232 and Thr253. Residue Lys460 participates in (6S)-5-formyl-5,6,7,8-tetrahydrofolate binding.

It belongs to the TRAFAC class TrmE-Era-EngA-EngB-Septin-like GTPase superfamily. TrmE GTPase family. As to quaternary structure, homodimer. Heterotetramer of two MnmE and two MnmG subunits. The cofactor is K(+).

It is found in the cytoplasm. Functionally, exhibits a very high intrinsic GTPase hydrolysis rate. Involved in the addition of a carboxymethylaminomethyl (cmnm) group at the wobble position (U34) of certain tRNAs, forming tRNA-cmnm(5)s(2)U34. The polypeptide is tRNA modification GTPase MnmE (Rhodopseudomonas palustris (strain HaA2)).